A 209-amino-acid chain; its full sequence is Redox-sensing transcriptional repressor Rex (209 aa).

Residues 16–55 constitute a DNA-binding region (H-T-H motif); the sequence is LYYRFIQNLSLSGKQRVSSAELSEAVKVDSATIRRDFSYF. 90–95 lines the NAD(+) pocket; the sequence is GVGNLG.

The protein belongs to the transcriptional regulatory Rex family. As to quaternary structure, homodimer.

It is found in the cytoplasm. Functionally, modulates transcription in response to changes in cellular NADH/NAD(+) redox state. This Bacillus thuringiensis (strain Al Hakam) protein is Redox-sensing transcriptional repressor Rex.